A 155-amino-acid polypeptide reads, in one-letter code: Endoribonuclease YbeY (155 aa).

3 residues coordinate Zn(2+): His-114, His-118, and His-124.

It belongs to the endoribonuclease YbeY family. Zn(2+) serves as cofactor.

The protein resides in the cytoplasm. Its function is as follows. Single strand-specific metallo-endoribonuclease involved in late-stage 70S ribosome quality control and in maturation of the 3' terminus of the 16S rRNA. The sequence is that of Endoribonuclease YbeY from Citrobacter koseri (strain ATCC BAA-895 / CDC 4225-83 / SGSC4696).